The sequence spans 417 residues: Serine hydroxymethyltransferase (417 aa).

Residues L120 and 124-126 each bind (6S)-5,6,7,8-tetrahydrofolate; that span reads GHL. An N6-(pyridoxal phosphate)lysine modification is found at K229. 354-356 provides a ligand contact to (6S)-5,6,7,8-tetrahydrofolate; sequence SPF.

This sequence belongs to the SHMT family. Homodimer. Requires pyridoxal 5'-phosphate as cofactor.

It is found in the cytoplasm. It catalyses the reaction (6R)-5,10-methylene-5,6,7,8-tetrahydrofolate + glycine + H2O = (6S)-5,6,7,8-tetrahydrofolate + L-serine. It functions in the pathway one-carbon metabolism; tetrahydrofolate interconversion. Its pathway is amino-acid biosynthesis; glycine biosynthesis; glycine from L-serine: step 1/1. Functionally, catalyzes the reversible interconversion of serine and glycine with tetrahydrofolate (THF) serving as the one-carbon carrier. This reaction serves as the major source of one-carbon groups required for the biosynthesis of purines, thymidylate, methionine, and other important biomolecules. Also exhibits THF-independent aldolase activity toward beta-hydroxyamino acids, producing glycine and aldehydes, via a retro-aldol mechanism. This Acinetobacter baylyi (strain ATCC 33305 / BD413 / ADP1) protein is Serine hydroxymethyltransferase.